A 193-amino-acid chain; its full sequence is dCTP deaminase (193 aa).

Residues 110-115, aspartate 128, 136-138, tyrosine 171, lysine 178, and glutamine 182 contribute to the dCTP site; these read RSSLAR and VLE. The Proton donor/acceptor role is filled by glutamate 138. The interval 173 to 193 is disordered; that stretch reads KRKNAKYKDQQDAVASRISQD.

Belongs to the dCTP deaminase family. Homotrimer.

It carries out the reaction dCTP + H2O + H(+) = dUTP + NH4(+). Its pathway is pyrimidine metabolism; dUMP biosynthesis; dUMP from dCTP (dUTP route): step 1/2. Functionally, catalyzes the deamination of dCTP to dUTP. This chain is dCTP deaminase, found in Shewanella sp. (strain ANA-3).